The chain runs to 1330 residues: Paired amphipathic helix protein Sin3-like 3 (1330 aa).

PAH domains follow at residues 8–78 (QKLT…LPKG) and 94–164 (KRVE…LPDT). Residues 191-246 (IITPHPDHDYGTEHIDQDRERPIKKENKEHMRGTNKENEHRDARDFEPHSKKEQFL) show a composition bias toward basic and acidic residues. Residues 191-281 (IITPHPDHDY…VPSSSTYDEK (91 aa)) form a disordered region. The segment covering 262 to 277 (ISNQSKLSGAVPSSST) has biased composition (polar residues). A PAH 3 domain is found at 283 to 351 (AMKSYSQDLA…DSFIEFLVQC (69 aa)). 5 disordered regions span residues 373-401 (GEGK…DRDH), 718-775 (NQNV…GRTS), 789-808 (KNVV…SIER), 882-906 (QEMA…FEED), and 920-1002 (SKAN…EAEC). A compositionally biased stretch (basic and acidic residues) spans 383–401 (DNDRDQEHKRDDGLRDRDH). Residues 723–734 (SGSSSAGESEGS) show a composition bias toward low complexity. The segment covering 789 to 800 (KNVVTSDEKPES) has biased composition (basic and acidic residues). Residues 920-932 (SKANDSTGNNISG) are compositionally biased toward polar residues. Composition is skewed to basic and acidic residues over residues 933 to 949 (DRSR…RAEN) and 956 to 968 (NAAR…RNEY). The span at 980–989 (GGEDPEDDLD) shows a compositional bias: acidic residues. Serine 996 bears the Phosphoserine mark.

As to quaternary structure, interacts with ERF7 and the histone deacetylase HDA19.

It localises to the nucleus. In terms of biological role, acts as a transcriptional repressor. Interacts with ERF7 to repress genes in abscisic acid and drought stress responses. The heterodimer represses transcription by tethering SNL3 to DNA. This is Paired amphipathic helix protein Sin3-like 3 (SNL3) from Arabidopsis thaliana (Mouse-ear cress).